We begin with the raw amino-acid sequence, 559 residues long: Amino-acid acetyltransferase, mitochondrial (559 aa).

The segment at 162–188 (RLGPKPGSEDPTSELDFTPPETHTLPP) is disordered. Residues 362-538 (LPVQVFHSVS…GSAGLSYVED (177 aa)) form the N-acetyltransferase domain.

This sequence belongs to the acetyltransferase family.

The protein localises to the mitochondrion. The enzyme catalyses L-glutamate + acetyl-CoA = N-acetyl-L-glutamate + CoA + H(+). It functions in the pathway amino-acid biosynthesis; L-arginine biosynthesis; N(2)-acetyl-L-ornithine from L-glutamate: step 1/4. N-acetylglutamate synthase involved in arginine biosynthesis. This Laccaria bicolor (strain S238N-H82 / ATCC MYA-4686) (Bicoloured deceiver) protein is Amino-acid acetyltransferase, mitochondrial (ARG2).